Consider the following 770-residue polypeptide: Multifunctional tryptophan biosynthesis protein (770 aa).

In terms of domain architecture, Glutamine amidotransferase type-1 spans 25–225; sequence NVILIDNYDS…LKLTAGTWEG (201 aa). An L-glutamine-binding site is contributed by 76–78; the sequence is GPG. The active-site Nucleophile; for GATase activity is Cys-104. L-glutamine is bound by residues Gln-108 and 154-155; that span reads SL. Active-site for GATase activity residues include His-199 and Glu-201. The segment at 228 to 251 is disordered; sequence KHFGEQSSTTKATVPSNPPPKTDK. Residues 232 to 242 show a composition bias toward polar residues; that stretch reads EQSSTTKATVP. An indole-3-glycerol phosphate synthase region spans residues 255–519; it reads ILERIYDHRR…DTATFIAELL (265 aa). The N-(5'-phosphoribosyl)anthranilate isomerase stretch occupies residues 535-770; sequence LVKICGTRSE…RAFVQAVRGL (236 aa).

The catalysed reaction is N-(5-phospho-beta-D-ribosyl)anthranilate = 1-(2-carboxyphenylamino)-1-deoxy-D-ribulose 5-phosphate. The enzyme catalyses 1-(2-carboxyphenylamino)-1-deoxy-D-ribulose 5-phosphate + H(+) = (1S,2R)-1-C-(indol-3-yl)glycerol 3-phosphate + CO2 + H2O. It catalyses the reaction chorismate + L-glutamine = anthranilate + pyruvate + L-glutamate + H(+). It participates in amino-acid biosynthesis; L-tryptophan biosynthesis; L-tryptophan from chorismate: step 1/5. Its pathway is amino-acid biosynthesis; L-tryptophan biosynthesis; L-tryptophan from chorismate: step 3/5. It functions in the pathway amino-acid biosynthesis; L-tryptophan biosynthesis; L-tryptophan from chorismate: step 4/5. In terms of biological role, trifunctional enzyme bearing the Gln amidotransferase (GATase) domain of anthranilate synthase, indole-glycerolphosphate synthase, and phosphoribosylanthranilate isomerase activities. This chain is Multifunctional tryptophan biosynthesis protein (trpC), found in Aspergillus niger.